The sequence spans 457 residues: Exodeoxyribonuclease 7 large subunit (457 aa).

This sequence belongs to the XseA family. Heterooligomer composed of large and small subunits.

It localises to the cytoplasm. The catalysed reaction is Exonucleolytic cleavage in either 5'- to 3'- or 3'- to 5'-direction to yield nucleoside 5'-phosphates.. In terms of biological role, bidirectionally degrades single-stranded DNA into large acid-insoluble oligonucleotides, which are then degraded further into small acid-soluble oligonucleotides. This is Exodeoxyribonuclease 7 large subunit from Escherichia coli O127:H6 (strain E2348/69 / EPEC).